A 351-amino-acid chain; its full sequence is UDP-N-acetylglucosamine transporter slc35b4 (351 aa).

Helical transmembrane passes span 6–26, 37–57, 77–97, 104–124, 136–156, 173–193, 209–229, 252–274, 282–302, and 306–326; these read LISL…VISL, AILV…FVNI, IPLK…VLNN, IPIP…IVIG, QILS…SSMP, FSIG…LGLI, TIFY…DDIL, TLWV…VFIL, TCTL…VIYF, and FTSL…MYST.

This sequence belongs to the nucleotide-sugar transporter family. SLC35B subfamily.

The protein localises to the golgi apparatus membrane. Functionally, sugar transporter that specifically mediates the transport of UDP-N-acetylglucosamine (UDP-GlcNAc) from cytosol into Golgi. The sequence is that of UDP-N-acetylglucosamine transporter slc35b4 (slc35b4) from Dictyostelium discoideum (Social amoeba).